A 422-amino-acid chain; its full sequence is Hexuronate transporter (422 aa).

11 helical membrane passes run 9 to 29, 45 to 65, 82 to 102, 141 to 161, 163 to 183, 219 to 239, 256 to 276, 294 to 314, 321 to 341, 356 to 376, and 381 to 401; these read VILFLFLAGVINYLDRSALSI, MGLIFSSFSIGYAIFNFLGGV, VWSLFSGAVALAFGFVSLLII, TPLGGAISGPIVGMIAVAFSW, VSFVLIMIIGLIWAVLWFKFV, LFTAFAFFAYNYILFFFLTWF, VITVIPWILGFIGLAAGGFVS, VVLVTCLFSSAVLIGFAGLVA, TLVALSVFFLYLTGAIYWAVI, FMHFLANTAGIIGPALTGFIV, and TFSGAFLLAGGLAVFASLAVI.

This sequence belongs to the major facilitator superfamily. Phthalate permease family.

The protein resides in the cell membrane. It carries out the reaction aldehydo-D-glucuronate(in) + H(+)(in) = aldehydo-D-glucuronate(out) + H(+)(out). The catalysed reaction is aldehydo-D-galacturonate(out) + H(+)(out) = aldehydo-D-galacturonate(in) + H(+)(in). Its function is as follows. Transport of aldohexuronates such as D-glucuronate and D-galacturonate. This is Hexuronate transporter from Bacillus subtilis (strain 168).